An 836-amino-acid polypeptide reads, in one-letter code: Spliceosome associated factor 3, U4/U6 recycling protein (836 aa).

5 HAT repeats span residues 127–163 (EDFK…YEMS), 296–329 (KLPQ…FERD), 331–367 (RPNE…LLRR), 418–451 (KNMD…LERQ), and 453–486 (GDKE…FERE). The interval 507-585 (RAIRPQKKVS…APGSFAVQKA (79 aa)) is disordered. Residues 540 to 550 (IVKKVKGDDGG) are compositionally biased toward basic and acidic residues. Positions 558-579 (SNAKSSSAVSSSNASSTPAPGS) are enriched in low complexity. 2 consecutive RRM domains span residues 593–668 (RTIF…ANDP) and 683–760 (SKVF…LSNP). 2 disordered regions span residues 757 to 786 (LSNP…PRKG) and 811 to 830 (AMDV…DQFR). The span at 816–827 (EGTSTSQPLSND) shows a compositional bias: polar residues.

In terms of assembly, forms a complex composed of sart-3, terminal uridylyltransferase usip-1 and U6 snRNA; complex formation is mediated by usip-1 and sart-3 binding to U6 snRNA. Associates with U4 and U6 snRNP complexes, probably by interacting with U4 and U6 snRNAs. As to expression, ubiquitously expressed.

The protein resides in the nucleus. The protein localises to the nucleoplasm. In terms of biological role, U6 snRNP-binding protein that functions as a recycling factor of the splicing machinery. Promotes the initial reassembly of U4 and U6 snRNPs following their ejection from the spliceosome during its maturation. The polypeptide is Spliceosome associated factor 3, U4/U6 recycling protein (Caenorhabditis elegans).